The chain runs to 273 residues: MATYLVGDLQGCYDELQLLLETVQFNPVQDKLYLVGDLVARGDKSLECLRFVKSLGAAAQMVLGNHDLHLISTALGIKKVSLQDHVEAIFTAPDFVELIDWLRHQPLLVHDEKCDFVMSHAGISPDWDLDTAKSCAREVENELQHGDYHYLISNMYDNQPDRWSADLQGLQRLRYSINVFTRMRFCYRDHRLDFACKASVEKASQELIPWFNLDNPLFKVQNLVFGHWASLVDTPTPANIYALDTGCVWGNRMTMLRWEDKQYFVQGALKDYF.

This sequence belongs to the Ap4A hydrolase family.

It carries out the reaction P(1),P(4)-bis(5'-adenosyl) tetraphosphate + H2O = 2 ADP + 2 H(+). Its function is as follows. Hydrolyzes diadenosine 5',5'''-P1,P4-tetraphosphate to yield ADP. This chain is Bis(5'-nucleosyl)-tetraphosphatase, symmetrical, found in Histophilus somni (strain 129Pt) (Haemophilus somnus).